The primary structure comprises 237 residues: uncharacterized protein (237 aa).

Positions 91, 93, and 122 each coordinate a divalent metal cation.

It belongs to the FAH family.

This is an uncharacterized protein from Methanocaldococcus jannaschii (strain ATCC 43067 / DSM 2661 / JAL-1 / JCM 10045 / NBRC 100440) (Methanococcus jannaschii).